We begin with the raw amino-acid sequence, 308 residues long: Snake venom metalloprotease inhibitor 02D01 (308 aa).

An N-terminal signal peptide occupies residues 1–23 (MFVSRLAASGLLLLSLLALSLDG). The propeptide occupies 24-38 (KPLPQRQPHHIQPME). Position 39 is a pyrrolidone carboxylic acid (Gln39). The propeptide occupies 42–50 (LAPDAPPLE). Gln51 bears the Pyrrolidone carboxylic acid mark. The propeptide occupies 54–62 (LAPDAPPLE). Residue Gln63 is modified to Pyrrolidone carboxylic acid. A propeptide spanning residues 66-74 (LAPAAPPLE) is cleaved from the precursor. Gln75 carries the post-translational modification Pyrrolidone carboxylic acid. The propeptide occupies 78-86 (LAPDAPPME). Gln87 is modified (pyrrolidone carboxylic acid). The propeptide occupies 90 to 98 (LAPDAPPME). At Gln99 the chain carries Pyrrolidone carboxylic acid. A propeptide spanning residues 102–110 (LAPDAPPME) is cleaved from the precursor. The residue at position 111 (Gln111) is a Pyrrolidone carboxylic acid. A propeptide spanning residues 114-122 (LAPDAPPME) is cleaved from the precursor. Residue Gln123 is modified to Pyrrolidone carboxylic acid. Residues 126–134 (LAPDAAPLE) constitute a propeptide that is removed on maturation. A Pyrrolidone carboxylic acid modification is found at Gln135. A propeptide spanning residues 138-146 (LAPDAPPME) is cleaved from the precursor. Gln147 is subject to Pyrrolidone carboxylic acid. Positions 150–158 (LAPDAPPME) are excised as a propeptide. Residue Gln159 is modified to Pyrrolidone carboxylic acid. The propeptide occupies 162–249 (QPQIPSLMEQ…KQASQKWGRL (88 aa)). Positions 172-182 (RQLSSGGTTAL) are enriched in polar residues. 2 disordered regions span residues 172–228 (RQLS…AAAT) and 252–279 (HDHDHHHHHHPGSSVGGGGGGGGGGARR). A compositionally biased stretch (gly residues) spans 198–209 (VVGGGGGGGGGS). Positions 210–227 (KAALALPKPPKAKGAAAA) are enriched in low complexity. The segment covering 265–277 (SVGGGGGGGGGGA) has biased composition (gly residues). A propeptide spanning residues 278 to 286 (RRLKGLAKK) is cleaved from the precursor. Cys292 and Cys308 form a disulfide bridge.

This sequence in the C-terminal section; belongs to the natriuretic peptide family. It in the central section; belongs to the pHpG family. Expressed by the venom gland.

It localises to the secreted. Functionally, pEKW and poly-His-poly-Gly peptides may serve as metalloproteinase inhibitors during glandular storage. Their inhibition may be instantly disengaged, by dilution or physiochemical change, when venom is injected into tissue of the prey. In terms of biological role, has a vasorelaxant activity in rat aortic strips and a diuretic potency in anesthetized rats. May act by activating natriuretic receptors (NPR1 and/or NPR2). In Echis ocellatus (Ocellated saw-scaled viper), this protein is Snake venom metalloprotease inhibitor 02D01.